A 631-amino-acid polypeptide reads, in one-letter code: MSQTNSHGEAAGTAKPIGLLIAAVGVVYGDIGTSPLYTLKEVFQGGYGVEVTHDAILGVLSLIFWSLIWVVSFKYMAFVLRADNQGEGGIMALMALARRASAKHPKLQMMMVVFGLFGAALFYGDSMITPAVSVLSAMEGLELAFDGLDHWIVPMALIVLVGLFLIQRHGTARIGVLFGPVMVTWFLVLGALGVYGIMQSPEVLKAVNPAWGVNFFIIHPGIGVAILGAVVLALTGAEALYADMGHFGRKPISRAWFILVLPALLLNYFGQGALVLGNPETVRNPFYLLAPGWALLPLIGLSTMATIIASQAVISGAFSMTLQAIQLGYIPRMHIQHTSSDAQGQIYIGAVNWALMAGVILLVIGFESSGALASAYGVAVTGTMLCTTILVSTVMLMLWKWPPLLAVPLLICLLLVDGLFFAANVPKIFQGGAFPVLAGAVLFILMTTWKRGKQLLAERIDEGGLPLPIFISSIRVQPPHRVQGTAVFLTARSDAVPHALLHNMLHNQVLHEQVVLLTVVYEDSPRVPAAQRVEVESYGEGFYRVILHFGFIDEPDVPAALALCDLPELDFSPMRTTYFLSRETVIPSKMDGMARWREALFAFMLKNANGNLRFFKLPFNRVIELGTQVEM.

Helical transmembrane passes span 17–37, 56–76, 109–129, 147–167, 174–194, 215–235, 256–276, 288–308, 346–366, 378–398, 403–423, and 428–448; these read IGLL…SPLY, ILGV…FKYM, MMMV…SMIT, GLDH…FLIQ, IGVL…ALGV, FFII…LALT, WFIL…ALVL, LLAP…ATII, IYIG…VIGF, VAVT…MLML, PLLA…FFAA, and IFQG…LMTT.

The protein belongs to the HAK/KUP transporter (TC 2.A.72) family.

It localises to the cell inner membrane. It catalyses the reaction K(+)(in) + H(+)(in) = K(+)(out) + H(+)(out). Its function is as follows. Transport of potassium into the cell. Likely operates as a K(+):H(+) symporter. This is Probable potassium transport system protein Kup from Pseudomonas savastanoi pv. phaseolicola (strain 1448A / Race 6) (Pseudomonas syringae pv. phaseolicola (strain 1448A / Race 6)).